The primary structure comprises 548 residues: Probable 2,3-bisphosphoglycerate-independent phosphoglycerate mutase (548 aa).

Mn(2+) is bound by residues Asp-20 and Ser-73. Ser-73 (phosphoserine intermediate) is an active-site residue. Substrate is bound by residues His-134, 164 to 165, Arg-200, Arg-207, 279 to 282, and Lys-354; these read RD and RGDR. Mn(2+) contacts are provided by Asp-422, His-426, Asp-463, His-464, and His-493.

This sequence belongs to the BPG-independent phosphoglycerate mutase family. In terms of assembly, monomer. Mn(2+) serves as cofactor.

The enzyme catalyses (2R)-2-phosphoglycerate = (2R)-3-phosphoglycerate. The protein operates within carbohydrate degradation; glycolysis; pyruvate from D-glyceraldehyde 3-phosphate: step 3/5. Functionally, catalyzes the interconversion of 2-phosphoglycerate and 3-phosphoglycerate. The sequence is that of Probable 2,3-bisphosphoglycerate-independent phosphoglycerate mutase (gpmI) from Leptospira interrogans serogroup Icterohaemorrhagiae serovar copenhageni (strain Fiocruz L1-130).